A 92-amino-acid polypeptide reads, in one-letter code: Small ribosomal subunit protein uS19c (92 aa).

The protein belongs to the universal ribosomal protein uS19 family.

The protein resides in the plastid. It is found in the chloroplast. Its function is as follows. Protein S19 forms a complex with S13 that binds strongly to the 16S ribosomal RNA. This is Small ribosomal subunit protein uS19c from Psilotum nudum (Whisk fern).